The primary structure comprises 99 residues: Indole-3-acetic acid-induced protein ARG2 (99 aa).

The segment at 40 to 62 (RGGASIGGNMVPKSGEEKVRGGE) is disordered. Residues 53–62 (SGEEKVRGGE) show a composition bias toward basic and acidic residues.

This chain is Indole-3-acetic acid-induced protein ARG2 (ARG2), found in Vigna radiata var. radiata (Mung bean).